The primary structure comprises 646 residues: 1-deoxy-D-xylulose-5-phosphate synthase (646 aa).

Thiamine diphosphate is bound by residues histidine 86 and 127 to 129 (AHS). Mg(2+) is bound at residue aspartate 158. Residues 159-160 (GA), asparagine 188, tyrosine 295, and glutamate 377 contribute to the thiamine diphosphate site. Asparagine 188 contributes to the Mg(2+) binding site.

It belongs to the transketolase family. DXPS subfamily. Homodimer. It depends on Mg(2+) as a cofactor. Requires thiamine diphosphate as cofactor.

The catalysed reaction is D-glyceraldehyde 3-phosphate + pyruvate + H(+) = 1-deoxy-D-xylulose 5-phosphate + CO2. Its pathway is metabolic intermediate biosynthesis; 1-deoxy-D-xylulose 5-phosphate biosynthesis; 1-deoxy-D-xylulose 5-phosphate from D-glyceraldehyde 3-phosphate and pyruvate: step 1/1. Functionally, catalyzes the acyloin condensation reaction between C atoms 2 and 3 of pyruvate and glyceraldehyde 3-phosphate to yield 1-deoxy-D-xylulose-5-phosphate (DXP). In Burkholderia cenocepacia (strain HI2424), this protein is 1-deoxy-D-xylulose-5-phosphate synthase.